The primary structure comprises 291 residues: MADLDDIKDGKDFGIGVPQQNPAFTLKGCGSLDWGMQSRLARIFNPKTNRTVMLAFDHGYFQGPTTGLERIDINIAPLFEYADVLMCTRGILRSIVPAAANRPVVLRASGANSILTDLSNEAVAVAMEDALRLNSCAVAAQVYIGTEHEHQSIKNIIQLVDQGIRYGMPTMAVTGVGKDMARDQRYFSLATRIAAEMGAQVIKTYYVDSGFERIAAGCPVPIVIAGGKKLPERDALEMCYQAIDQGASGVDMGRNIFQSEAPIAMLKAVHAVVHKNENAETAYKLFLHEKG.

The active-site Schiff-base intermediate with substrate is the Lys-203.

Belongs to the DeoC/FbaB aldolase family. In terms of assembly, homodecamer.

It localises to the cytoplasm. It catalyses the reaction dihydroxyacetone phosphate + acetyl-CoA = 3-hydroxy-2,4-dioxopentyl phosphate + CoA. Its function is as follows. Involved in the degradation of phospho-AI-2, thereby terminating induction of the lsr operon and closing the AI-2 signaling cycle. Catalyzes the transfer of an acetyl moiety from 3-hydroxy-5-phosphonooxypentane-2,4-dione to CoA to form glycerone phosphate and acetyl-CoA. In Yersinia enterocolitica serotype O:8 / biotype 1B (strain NCTC 13174 / 8081), this protein is 3-hydroxy-5-phosphonooxypentane-2,4-dione thiolase.